The sequence spans 760 residues: 5-methyltetrahydropteroyltriglutamate--homocysteine methyltransferase (760 aa).

Residues 17-20 and lysine 118 contribute to the 5-methyltetrahydropteroyltri-L-glutamate site; that span reads RELK. L-homocysteine-binding positions include 436–438 and glutamate 489; that span reads IGS. L-methionine contacts are provided by residues 436–438 and glutamate 489; that span reads IGS. Residues 520 to 521 and tryptophan 566 each bind 5-methyltetrahydropteroyltri-L-glutamate; that span reads RC. Aspartate 604 is a binding site for L-homocysteine. Position 604 (aspartate 604) interacts with L-methionine. Residue glutamate 610 participates in 5-methyltetrahydropteroyltri-L-glutamate binding. Residues histidine 646, cysteine 648, and glutamate 670 each contribute to the Zn(2+) site. The active-site Proton donor is the histidine 699. Residue cysteine 731 coordinates Zn(2+).

It belongs to the vitamin-B12 independent methionine synthase family. Zn(2+) is required as a cofactor.

The catalysed reaction is 5-methyltetrahydropteroyltri-L-glutamate + L-homocysteine = tetrahydropteroyltri-L-glutamate + L-methionine. Its pathway is amino-acid biosynthesis; L-methionine biosynthesis via de novo pathway; L-methionine from L-homocysteine (MetE route): step 1/1. In terms of biological role, catalyzes the transfer of a methyl group from 5-methyltetrahydrofolate to homocysteine resulting in methionine formation. This is 5-methyltetrahydropteroyltriglutamate--homocysteine methyltransferase from Vibrio parahaemolyticus serotype O3:K6 (strain RIMD 2210633).